We begin with the raw amino-acid sequence, 184 residues long: Inosine triphosphate pyrophosphatase (184 aa).

10 to 15 (TGNVKK) serves as a coordination point for ITP. Position 37 (E37) interacts with Mg(2+). ITP contacts are provided by residues K49, 65–66 (DT), K82, 141–144 (FGWD), K164, and 169–170 (HR).

The protein belongs to the HAM1 NTPase family. In terms of assembly, homodimer. Requires Mg(2+) as cofactor. Mn(2+) is required as a cofactor.

The protein localises to the cytoplasm. The catalysed reaction is ITP + H2O = IMP + diphosphate + H(+). It carries out the reaction dITP + H2O = dIMP + diphosphate + H(+). The enzyme catalyses XTP + H2O = XMP + diphosphate + H(+). In terms of biological role, pyrophosphatase that hydrolyzes non-canonical purine nucleotides such as inosine triphosphate (ITP), deoxyinosine triphosphate (dITP) or xanthosine 5'-triphosphate (XTP) to their respective monophosphate derivatives. The enzyme does not distinguish between the deoxy- and ribose forms. Probably excludes non-canonical purines from RNA and DNA precursor pools, thus preventing their incorporation into RNA and DNA and avoiding chromosomal lesions. The chain is Inosine triphosphate pyrophosphatase from Caenorhabditis elegans.